A 632-amino-acid chain; its full sequence is Lipoma-preferred partner homolog (632 aa).

Disordered regions lie at residues 1 to 118 (MSHP…RSSL) and 135 to 249 (SSPY…RSYN). Residues 26-40 (THSFGTPSISVSTQQ) show a composition bias toward polar residues. The segment covering 41 to 53 (PPKKFAPVVAPKP) has biased composition (low complexity). Lysine 109 bears the N6-acetyllysine mark. Residues serine 117 and serine 152 each carry the phosphoserine modification. Over residues 144 to 160 (PGSSSSIASPPVSTPVT) the composition is skewed to low complexity. 2 stretches are compositionally biased toward polar residues: residues 172–182 (PLTATKKSATK) and 206–239 (SYST…SSGQ). Tyrosine 241 is modified (phosphotyrosine). Arginine 246 is modified (omega-N-methylarginine). Lysine 324 is covalently cross-linked (Glycyl lysine isopeptide (Lys-Gly) (interchain with G-Cter in SUMO1)). LIM zinc-binding domains are found at residues 434 to 493 (GRCA…INTL), 494 to 554 (EQCS…KFAP), and 555 to 623 (RCSV…RIRV).

This sequence belongs to the zyxin/ajuba family. Interacts with PDZ domains of SCRIB, with VASP and with ACTN1/alpha-actinin.

It is found in the nucleus. Its subcellular location is the cytoplasm. It localises to the cell junction. Its function is as follows. May play a structural role at sites of cell adhesion in maintaining cell shape and motility. In addition to these structural functions, it may also be implicated in signaling events and activation of gene transcription. May be involved in signal transduction from cell adhesion sites to the nucleus allowing successful integration of signals arising from soluble factors and cell-cell adhesion. Also suggested to serve as a scaffold protein upon which distinct protein complexes are assembled in the cytoplasm and in the nucleus. This chain is Lipoma-preferred partner homolog (Lpp), found in Rattus norvegicus (Rat).